The sequence spans 25 residues: Pregnancy-associated glycoprotein 72 (25 aa).

Residues Asn-4 and Asn-21 are each glycosylated (N-linked (GlcNAc...) asparagine).

The protein belongs to the peptidase A1 family. Post-translationally, N-glycosylated. Expressed in chorionic epithelium (trophectoderm).

It localises to the secreted. It is found in the extracellular space. The polypeptide is Pregnancy-associated glycoprotein 72 (Bison bison (American bison)).